Consider the following 369-residue polypeptide: Coproporphyrin III ferrochelatase (369 aa).

Positions 61 and 130 each coordinate Fe-coproporphyrin III. His-197 and Glu-286 together coordinate Fe(2+).

The protein belongs to the ferrochelatase family.

The protein resides in the cytoplasm. It catalyses the reaction Fe-coproporphyrin III + 2 H(+) = coproporphyrin III + Fe(2+). The protein operates within porphyrin-containing compound metabolism; protoheme biosynthesis. In terms of biological role, involved in coproporphyrin-dependent heme b biosynthesis. Catalyzes the insertion of ferrous iron into coproporphyrin III to form Fe-coproporphyrin III. This Corynebacterium diphtheriae (strain ATCC 700971 / NCTC 13129 / Biotype gravis) protein is Coproporphyrin III ferrochelatase.